The following is a 77-amino-acid chain: Large ribosomal subunit protein bL28 (77 aa).

It belongs to the bacterial ribosomal protein bL28 family.

The polypeptide is Large ribosomal subunit protein bL28 (Verminephrobacter eiseniae (strain EF01-2)).